The chain runs to 643 residues: Cytoplasmic dynein 1 intermediate chain 1 (643 aa).

Composition is skewed to basic and acidic residues over residues 1–13 (MSDK…ELER) and 20–60 (QIRE…RETE). Disordered regions lie at residues 1–65 (MSDK…LLQS) and 96–123 (MSPS…RTLQ). The residue at position 2 (serine 2) is an N-acetylserine. An interaction with DCTN1 region spans residues 2 to 123 (SDKSDLKAEL…DLGPLTRTLQ (122 aa)). Phosphoserine occurs at positions 50 and 100. The segment covering 96–107 (MSPSSKSVSTPS) has biased composition (low complexity). At threonine 105 the chain carries Phosphothreonine. 2 positions are modified to phosphoserine: serine 107 and serine 111. Positions 145–161 (KLGVSKVTQVDFLPREV) are interaction with DYNLT1. The interval 167-219 (ETQTPLATHQSEEDEEDEEMVEPKVGHDSELENQDKKQETKEAPPRELTEEEK) is disordered. The residue at position 174 (threonine 174) is a Phosphothreonine. A phosphoserine mark is found at serine 177 and serine 195. Residues 187–219 (VEPKVGHDSELENQDKKQETKEAPPRELTEEEK) show a composition bias toward basic and acidic residues. WD repeat units follow at residues 283–332 (SKHR…TTPE), 336–376 (HCQS…RTPV), 385–426 (AHTH…TPQE), 435–475 (SKPV…AGIG), 480–525 (GHQG…PLYS), 528–568 (DNAD…EVPT), and 574–613 (EGAY…VPHN). Serine 633 is subject to Phosphoserine.

Belongs to the dynein intermediate chain family. Homodimer. The cytoplasmic dynein 1 complex consists of two catalytic heavy chains (HCs) and a number of non-catalytic subunits presented by intermediate chains (ICs), light intermediate chains (LICs) and light chains (LCs); the composition seems to vary in respect to the IC, LIC and LC composition. The heavy chain homodimer serves as a scaffold for the probable homodimeric assembly of the respective non-catalytic subunits. The ICs and LICs bind directly to the HC dimer and the LCs assemble on the IC dimer. Isoform 1, isoform 2 and isoform 3 interact with DYNC1H1. Isoform 1, isoform 2 and isoform 3 interact with DYNLT3. Isoform 1, isoform 2 and isoform 3 interact with DYNLT1. Interacts with DCTN1. Interacts with MCRS1; the interaction is required for the proper distribution of centriolar satellites. High levels seen in the brain and testis, while a lower level expression is seen in the liver, spleen, kidney, lung, skeletal muscle and heart.

The protein localises to the cytoplasm. It is found in the chromosome. The protein resides in the centromere. Its subcellular location is the kinetochore. It localises to the cytoskeleton. The protein localises to the spindle pole. Its function is as follows. Acts as one of several non-catalytic accessory components of the cytoplasmic dynein 1 complex that are thought to be involved in linking dynein to cargos and to adapter proteins that regulate dynein function. Cytoplasmic dynein 1 acts as a motor for the intracellular retrograde motility of vesicles and organelles along microtubules. The intermediate chains mediate the binding of dynein to dynactin via its 150 kDa component (p150-glued) DCTN1. May play a role in mediating the interaction of cytoplasmic dynein with membranous organelles and kinetochores. This Rattus norvegicus (Rat) protein is Cytoplasmic dynein 1 intermediate chain 1 (Dync1i1).